The following is a 72-amino-acid chain: UPF0154 protein Bcer98_2334 (72 aa).

A helical membrane pass occupies residues 3–23 (IWSGILVGVVALLAGVALGFF).

The protein belongs to the UPF0154 family.

The protein localises to the cell membrane. This Bacillus cytotoxicus (strain DSM 22905 / CIP 110041 / 391-98 / NVH 391-98) protein is UPF0154 protein Bcer98_2334.